A 349-amino-acid chain; its full sequence is Small ribosomal subunit biogenesis GTPase RsgA (349 aa).

Over residues Met1–Gln11 the composition is skewed to basic residues. The disordered stretch occupies residues Met1–Gln35. In terms of domain architecture, CP-type G spans Tyr111–Phe272. GTP-binding positions include Asn158–Asp161 and Gly212–Ser220. Zn(2+) contacts are provided by Cys296, Cys301, His303, and Cys309.

It belongs to the TRAFAC class YlqF/YawG GTPase family. RsgA subfamily. In terms of assembly, monomer. Associates with 30S ribosomal subunit, binds 16S rRNA. It depends on Zn(2+) as a cofactor.

It is found in the cytoplasm. Its function is as follows. One of several proteins that assist in the late maturation steps of the functional core of the 30S ribosomal subunit. Helps release RbfA from mature subunits. May play a role in the assembly of ribosomal proteins into the subunit. Circularly permuted GTPase that catalyzes slow GTP hydrolysis, GTPase activity is stimulated by the 30S ribosomal subunit. The polypeptide is Small ribosomal subunit biogenesis GTPase RsgA (Dickeya dadantii (strain 3937) (Erwinia chrysanthemi (strain 3937))).